The sequence spans 393 residues: Protein TsgA (393 aa).

Transmembrane regions (helical) follow at residues 11-31 (WISFLSYALTGALVIVTGMVM), 51-71 (FLNAGILISIFLNAWLMEIVP), 78-98 (FGFLLMVLAVAGLMFSHSLAL), 101-121 (TAMFILGVVSGITMSIGTFLI), 134-154 (LLFTDSFFSMAGMIFPMIAAF), 162-182 (WYWVYACIGLVYVAIFILTFG), 206-226 (IGVLFLSVAALCYILGQLGFI), 245-265 (TLVSNFWMSYMVGMWAFSFIL), 273-293 (ILTVLAGLAAILMYVFNTGTP), 297-317 (AWSILALGFFSSAIYTTIITL), 332-352 (FVLTCGTIGTMLTFVVTGPIV), and 361-381 (LLTANGLYAVVFVMCFLLGFV).

Belongs to the major facilitator superfamily. TsgA family.

It localises to the cell inner membrane. The sequence is that of Protein TsgA from Shigella boydii serotype 4 (strain Sb227).